Reading from the N-terminus, the 369-residue chain is Tyrosine-protein phosphatase non-receptor type 5 (369 aa).

Position 49 is a phosphoserine; by PKA (Ser49). Thr59 is subject to Phosphothreonine; by MAPK. Residue Ser72 is modified to Phosphoserine; by MAPK. One can recognise a Tyrosine-protein phosphatase domain in the interval 104 to 359; the sequence is LQAEFFEIPM…QFVHHAMSLY (256 aa). Residues Asp265, 300–306, and Gln344 contribute to the substrate site; that span reads CSAGIGR. Catalysis depends on Cys300, which acts as the Phosphocysteine intermediate.

This sequence belongs to the protein-tyrosine phosphatase family. Non-receptor class subfamily. Phosphorylation at Ser-49 by PKA deactivates PTPN5. Phosphorylation at Thr-59 and Ser-72 by MAPKs stabilizes the phosphatase, dephosphorylation of these sites results in ubiquitin-mediated degradation of the active phosphatase. As to expression, expressed in the central nervous system except in the cerebellum. Enriched within the striatum relative to other brain areas.

It is found in the cytoplasm. The catalysed reaction is O-phospho-L-tyrosyl-[protein] + H2O = L-tyrosyl-[protein] + phosphate. Its function is as follows. May regulate the activity of several effector molecules involved in synaptic plasticity and neuronal cell survival, including MAPKs, Src family kinases and NMDA receptors. The sequence is that of Tyrosine-protein phosphatase non-receptor type 5 (Ptpn5) from Rattus norvegicus (Rat).